The following is a 450-amino-acid chain: Keratin, type I cytoskeletal 25 (450 aa).

A compositionally biased stretch (low complexity) spans 1-11 (MSLRLSSASRR). Positions 1–20 (MSLRLSSASRRSCPRPTTGS) are disordered. Residues 1 to 78 (MSLRLSSASR…VNERGLLSGN (78 aa)) form a head region. Residues 79–114 (EKVTMQNLNDRLASYLDSVHALEEANADLEQKIKGW) form a coil 1A region. In terms of domain architecture, IF rod spans 79-394 (EKVTMQNLND…LLIGGDDGAC (316 aa)). Positions 115 to 136 (YEKFGPGSCRGLDHDYSRYFPI) are linker 1. Residues 137–228 (IDDLKNQIIA…KNHKEEMQVL (92 aa)) form a coil 1B region. The tract at residues 229–251 (QCAAGGNVNVEMNAAPGVDLTVL) is linker 12. The coil 2 stretch occupies residues 252 to 390 (LNNMRAEYEA…ETYCLLIGGD (139 aa)). The tail stretch occupies residues 391 to 450 (DGACKSGGYKSKDYGSGNVGSQVKDPAKAIVVKKVLEEVDQRSKILTTRLHSLEEKSQSN). The residue at position 442 (serine 442) is a Phosphoserine.

Belongs to the intermediate filament family. Heterodimer of a type I and a type II keratin. Heterodimer with type II keratin KRT5 leading to the formation of keratin intermediate filament (KIF) network. Interacts with KRT6A to form filaments. In terms of tissue distribution, strongly expressed in skin and scalp, and weak expression observed in thymus and tongue. In the hair follicle, expressed in Henle layer, Huxley layer and in the inner root sheath cuticle of the hair follicle. Expression extends from the bulb region up to the point of differentiation into the three layers. Also present in the medulla of beard hair (at protein level).

The protein localises to the cytoplasm. Functionally, essential for the proper assembly of type I and type II keratin protein complexes and formation of keratin intermediate filaments in the inner root sheath (irs). Plays a role in the cytoskeleton organization. The chain is Keratin, type I cytoskeletal 25 from Homo sapiens (Human).